A 699-amino-acid chain; its full sequence is UvrABC system protein C (699 aa).

Over residues 1 to 51 (MIQHPTDTPEVAADAAAEPERAAGAAGATPQPSQDAVEPAADVDAATASLA) the composition is skewed to low complexity. The disordered stretch occupies residues 1–59 (MIQHPTDTPEVAADAAAEPERAAGAAGATPQPSQDAVEPAADVDAATASLAAEDDDEPV). The 79-residue stretch at 92–170 (TSPGVYRMLN…IKQLRPRFNV (79 aa)) folds into the GIY-YIG domain. Residues 280–315 (RLVKQELAGEMEKASAELEFETAALYRDRLAALSAI) enclose the UVR domain.

The protein belongs to the UvrC family. As to quaternary structure, interacts with UvrB in an incision complex.

The protein localises to the cytoplasm. In terms of biological role, the UvrABC repair system catalyzes the recognition and processing of DNA lesions. UvrC both incises the 5' and 3' sides of the lesion. The N-terminal half is responsible for the 3' incision and the C-terminal half is responsible for the 5' incision. The polypeptide is UvrABC system protein C (Rhodopseudomonas palustris (strain BisB18)).